A 514-amino-acid polypeptide reads, in one-letter code: F-box-like/WD repeat-containing protein TBL1XR1 (514 aa).

Residue Ser2 is modified to N-acetylserine. The LisH domain maps to 4–36; it reads SSDEVNFLVYRYLQESGFSHSAFTFGIESHISQ. The F-box-like domain maps to 41–86; the sequence is GALVPPAALISIIQKGLQYVEAEVSINEDGTLFDGRPIESLSLIDA. Lys102 carries the N6-acetyllysine modification. Positions 114-139 are disordered; it reads AAAATNQQGSAKNGENTANGEENGAH. Low complexity predominate over residues 124-135; the sequence is AKNGENTANGEE. WD repeat units lie at residues 167-206, 223-262, 264-303, 306-344, 347-386, 389-437, 440-479, and 481-513; these read GHES…TSGP, PSNK…ASTL, QHKG…AKQQ, FHSA…PIKT, GHTN…CVHD, AHNK…CIHT, KHQE…LVHS, and RGTG…LDLR. Lys277 participates in a covalent cross-link: Glycyl lysine isopeptide (Lys-Gly) (interchain with G-Cter in SUMO2).

Belongs to the WD repeat EBI family. Component of the N-Cor repressor complex, at least composed of NCOR1, NCOR2, HDAC3, TBL1X, TBL1XR1, CORO2A and GPS2. Probable component of some E3 ubiquitin ligase complex. Interacts with histones H2B and H4. Interacts with MECP2; bridges interaction between MECP2 and NCOR1. Interacts with USP44.

It localises to the nucleus. In terms of biological role, F-box-like protein involved in the recruitment of the ubiquitin/19S proteasome complex to nuclear receptor-regulated transcription units. Plays an essential role in transcription activation mediated by nuclear receptors. Probably acts as integral component of the N-Cor corepressor complex that mediates the recruitment of the 19S proteasome complex, leading to the subsequent proteasomal degradation of N-Cor complex, thereby allowing cofactor exchange, and transcription activation. In Mus musculus (Mouse), this protein is F-box-like/WD repeat-containing protein TBL1XR1 (Tbl1xr1).